The following is a 143-amino-acid chain: Large ribosomal subunit protein uL11 (143 aa).

It belongs to the universal ribosomal protein uL11 family. Part of the ribosomal stalk of the 50S ribosomal subunit. Interacts with L10 and the large rRNA to form the base of the stalk. L10 forms an elongated spine to which L12 dimers bind in a sequential fashion forming a multimeric L10(L12)X complex. Post-translationally, one or more lysine residues are methylated.

Forms part of the ribosomal stalk which helps the ribosome interact with GTP-bound translation factors. The polypeptide is Large ribosomal subunit protein uL11 (Paraburkholderia xenovorans (strain LB400)).